A 690-amino-acid polypeptide reads, in one-letter code: Elongation factor G (690 aa).

In terms of domain architecture, tr-type G spans 8-283; it reads EDYRNFGIMA…AVVDYLPSPV (276 aa). GTP-binding positions include 17-24, 81-85, and 135-138; these read AHIDAGKT, DTPGH, and NKMD.

This sequence belongs to the TRAFAC class translation factor GTPase superfamily. Classic translation factor GTPase family. EF-G/EF-2 subfamily.

The protein localises to the cytoplasm. Functionally, catalyzes the GTP-dependent ribosomal translocation step during translation elongation. During this step, the ribosome changes from the pre-translocational (PRE) to the post-translocational (POST) state as the newly formed A-site-bound peptidyl-tRNA and P-site-bound deacylated tRNA move to the P and E sites, respectively. Catalyzes the coordinated movement of the two tRNA molecules, the mRNA and conformational changes in the ribosome. In Rhodopseudomonas palustris (strain BisB5), this protein is Elongation factor G.